Reading from the N-terminus, the 180-residue chain is Pro-glucagon (180 aa).

Residues 1–20 (MKNIYIVAGFFVVLVQGSWQ) form the signal peptide. Residues 25-59 (DTEEKSRSFPASQTDPLEDPDQINEDKRHSQGTFT) are disordered. Serine 54 is modified (phosphoserine). A propeptide spanning residues 84-89 (NRNNIA) is cleaved from the precursor. Phosphoserine occurs at positions 105 and 108. At arginine 127 the chain carries Arginine amide. Residues 131–145 (DFPEEVTIVEELGRR) constitute a propeptide that is removed on maturation. A phosphoserine mark is found at serine 150 and serine 152.

The protein belongs to the glucagon family. In terms of processing, proglucagon is post-translationally processed in a tissue-specific manner in pancreatic A cells and intestinal L cells. In pancreatic A cells, the major bioactive hormone is glucagon cleaved by PCSK2/PC2. In the intestinal L cells PCSK1/PC1 liberates GLP-1, GLP-2, glicentin and oxyntomodulin. GLP-1 is further N-terminally truncated by post-translational processing in the intestinal L cells resulting in GLP-1(7-37) GLP-1-(7-36)amide. The C-terminal amidation is neither important for the metabolism of GLP-1 nor for its effects on the endocrine pancreas.

Its subcellular location is the secreted. Functionally, plays a key role in glucose metabolism and homeostasis. Regulates blood glucose by increasing gluconeogenesis and decreasing glycolysis. A counterregulatory hormone of insulin, raises plasma glucose levels in response to insulin-induced hypoglycemia. Plays an important role in initiating and maintaining hyperglycemic conditions in diabetes. Its function is as follows. Potent stimulator of glucose-dependent insulin release. Also stimulates insulin release in response to IL6. Plays important roles on gastric motility and the suppression of plasma glucagon levels. May be involved in the suppression of satiety and stimulation of glucose disposal in peripheral tissues, independent of the actions of insulin. Has growth-promoting activities on intestinal epithelium. May also regulate the hypothalamic pituitary axis (HPA) via effects on LH, TSH, CRH, oxytocin, and vasopressin secretion. Increases islet mass through stimulation of islet neogenesis and pancreatic beta cell proliferation. Inhibits beta cell apoptosis. Stimulates intestinal growth and up-regulates villus height in the small intestine, concomitant with increased crypt cell proliferation and decreased enterocyte apoptosis. The gastrointestinal tract, from the stomach to the colon is the principal target for GLP-2 action. Plays a key role in nutrient homeostasis, enhancing nutrient assimilation through enhanced gastrointestinal function, as well as increasing nutrient disposal. Stimulates intestinal glucose transport and decreases mucosal permeability. In terms of biological role, significantly reduces food intake. Inhibits gastric emptying in humans. Suppression of gastric emptying may lead to increased gastric distension, which may contribute to satiety by causing a sensation of fullness. Functionally, may modulate gastric acid secretion and the gastro-pyloro-duodenal activity. May play an important role in intestinal mucosal growth in the early period of life. This Mesocricetus auratus (Golden hamster) protein is Pro-glucagon (GCG).